We begin with the raw amino-acid sequence, 234 residues long: Large ribosomal subunit protein uL1 (234 aa).

Belongs to the universal ribosomal protein uL1 family. Part of the 50S ribosomal subunit.

Functionally, binds directly to 23S rRNA. The L1 stalk is quite mobile in the ribosome, and is involved in E site tRNA release. Its function is as follows. Protein L1 is also a translational repressor protein, it controls the translation of the L11 operon by binding to its mRNA. The sequence is that of Large ribosomal subunit protein uL1 from Campylobacter fetus subsp. fetus (strain 82-40).